The sequence spans 102 residues: MLRHKTKRGHASLDCLKVFDGIPPPYDKKKRMVVPAALKVVRLKPTRKFALLGRQAQEVRWKYQAVTATLEEKRKEKAKIHYWKKKQLMRLRKQAEKNVKKN.

It belongs to the universal ribosomal protein uL13 family.

The protein is Putative ribosomal protein uL13-like (RPL13AP3) of Homo sapiens (Human).